We begin with the raw amino-acid sequence, 733 residues long: MMISKKYTLWALNPLLLTMMAPAVAQQTDDETFVVSANRSNRTVAEMAQTTWVIENAELEQQIQGGKELKDALAQLIPGLDVSSRSRTNYGMNVRGRPLVVLVDGVRLNSSRTDSRQLDSIDPFNIDRIEVISGATSLYGGGSTGGLINIVTKKGQPETIMEFEAGTKSGFSSSKDHDERIAGAVSGGNEHISGRLSVAYQKFGGWFDGNGDATLLDNTQTGLQYSDRLDIMGTGTLNIDESRQLQLITQYYKSQGDDDYGLNLGKGFSAIRGTSTPFVSNGLNSDRIPGTERHLISLQYSDSAFLGQELVGQVYYRDESLRFYPFPTVNANKQVTAFSSSQQDTDQYGMKLTLNSKPMDGWQITWGLDADHERFTSNQMFFDLAQASASGGLNNKKIYTTGRYPSYDITNLAAFLQSGYDINNLFTLNGGVRYQYTENKIDDFIGYAQQRQIAAGKATSADAIPGGSVDYDNFLFNAGLLMHITERQQAWLNFSQGVELPDPGKYYGRGIYGAAVNGHLPLTKSVNVSDSKLEGVKVDSYELGWRFTGNNLRTQIAAYYSISDKSVVANKDLTISVVDDKRRIYGVEGAVDYLIPDTDWSTGVNFNVLKTESKVNGTWQKYDVKTASPSKATAYIGWAPDPWSLRVQSTTSFDVSDAQGYKVDGYTTVDLLGSYQLPVGTLSFSIENLFDRDYTTVWGQRAPLYYSPGYGPASLYDYKGRGRTFGLNYSVLF.

The signal sequence occupies residues 1 to 25 (MMISKKYTLWALNPLLLTMMAPAVA). The TonB box motif lies at 31 to 38 (ETFVVSAN). One can recognise a TBDR plug domain in the interval 43 to 153 (TVAEMAQTTW…TGGLINIVTK (111 aa)). The TBDR beta-barrel domain maps to 158-733 (ETIMEFEAGT…TFGLNYSVLF (576 aa)). The short motif at 716 to 733 (YDYKGRGRTFGLNYSVLF) is the TonB C-terminal box element.

Belongs to the TonB-dependent receptor family.

The protein resides in the cell outer membrane. Receptor for aerobactin. The polypeptide is Ferric aerobactin receptor (iutA) (Klebsiella pneumoniae).